Consider the following 298-residue polypeptide: Glutamyl-Q tRNA(Asp) synthetase (298 aa).

L-glutamate-binding positions include 9–13 and glutamate 45; that span reads RFAPS. Positions 12–22 match the 'HIGH' region motif; sequence PSPSGELHFGS. The Zn(2+) site is built by cysteine 101, cysteine 103, tyrosine 115, and cysteine 119. Residues tyrosine 172 and arginine 190 each contribute to the L-glutamate site. Residues 228–232 carry the 'KMSKS' region motif; it reads KLSKQ. Lysine 231 provides a ligand contact to ATP.

It belongs to the class-I aminoacyl-tRNA synthetase family. GluQ subfamily. It depends on Zn(2+) as a cofactor.

Functionally, catalyzes the tRNA-independent activation of glutamate in presence of ATP and the subsequent transfer of glutamate onto a tRNA(Asp). Glutamate is transferred on the 2-amino-5-(4,5-dihydroxy-2-cyclopenten-1-yl) moiety of the queuosine in the wobble position of the QUC anticodon. The polypeptide is Glutamyl-Q tRNA(Asp) synthetase (Salmonella typhi).